The chain runs to 2290 residues: Protein Ycf2 (2290 aa).

1644–1651 (GSIGTGRS) contacts ATP.

This sequence belongs to the Ycf2 family.

Its subcellular location is the plastid. It localises to the chloroplast stroma. Functionally, probable ATPase of unknown function. Its presence in a non-photosynthetic plant (Epifagus virginiana) and experiments in tobacco indicate that it has an essential function which is probably not related to photosynthesis. The chain is Protein Ycf2 from Nasturtium officinale (Watercress).